The following is a 95-amino-acid chain: Co-chaperonin GroES (95 aa).

This sequence belongs to the GroES chaperonin family. In terms of assembly, heptamer of 7 subunits arranged in a ring. Interacts with the chaperonin GroEL.

The protein resides in the cytoplasm. In terms of biological role, together with the chaperonin GroEL, plays an essential role in assisting protein folding. The GroEL-GroES system forms a nano-cage that allows encapsulation of the non-native substrate proteins and provides a physical environment optimized to promote and accelerate protein folding. GroES binds to the apical surface of the GroEL ring, thereby capping the opening of the GroEL channel. The polypeptide is Co-chaperonin GroES (Francisella philomiragia subsp. philomiragia (strain ATCC 25017 / CCUG 19701 / FSC 153 / O#319-036)).